Reading from the N-terminus, the 300-residue chain is Probable ABC transporter permease protein YurM (300 aa).

Transmembrane regions (helical) follow at residues 37-57, 98-118, 129-149, 161-181, 204-224, and 264-284; these read VWVF…WMVM, VIVT…AAYG, FFLV…LVPL, TYWA…IILI, FGVF…TSGI, and WGVL…LFLL. The 192-residue stretch at 94–285 folds into the ABC transmembrane type-1 domain; that stretch reads FMNSVIVTAL…APIIILFLLM (192 aa).

It belongs to the binding-protein-dependent transport system permease family. MalFG subfamily.

The protein localises to the cell membrane. In terms of biological role, probably part of the binding-protein-dependent transport system YurMNO. Probably responsible for the translocation of the substrate across the membrane. This is Probable ABC transporter permease protein YurM (yurM) from Bacillus subtilis (strain 168).